Here is a 372-residue protein sequence, read N- to C-terminus: Cyclic GMP-AMP synthase-like receptor (372 aa).

Position 68 (Thr68) interacts with GTP. ATP-binding positions include Ser70 and 82 to 84; that span reads EFD. Mg(2+) contacts are provided by Glu82, Asp84, and Asp190. GTP contacts are provided by residues Asp190 and 236-243; that span reads LVCAPYWE. ATP is bound by residues 240–243, Lys261, and 274–278; these read PYWE and SYTIK.

Belongs to the mab-21 family. It depends on Mg(2+) as a cofactor. Requires Mn(2+) as cofactor.

It carries out the reaction GTP + ATP = 3',2'-cGAMP + 2 diphosphate. It catalyses the reaction GTP + ATP = pppA(2'-5')pG + diphosphate. The catalysed reaction is pppA(2'-5')pG = 3',2'-cGAMP + diphosphate. With respect to regulation, the enzyme activity is specifically activated by double-stranded RNA (dsRNA). Its function is as follows. Nucleotidyltransferase that catalyzes the formation of cyclic GMP-AMP (3',2'-cGAMP) from ATP and GTP and plays a key role in innate immunity. Synthesizes 3',2'-cGAMP in a two-step reaction through production of the linear intermediate pppA(2'-5')pG. Acts as a key sensor of double-stranded RNA (dsRNA), the presence of dsRNA in the cytoplasm being a danger signal that triggers the immune responses. Directly binds dsRNA longer than 15 bp, activating the nucleotidyltransferase activity, leading to synthesis of 3',2'-cGAMP, a second messenger that binds to and activates Sting, thereby triggering the antiviral immune response via activation of the NF-kappa-B transcription factor Rel (Relish). This is Cyclic GMP-AMP synthase-like receptor from Drosophila eugracilis (Fruit fly).